The chain runs to 312 residues: Olfactory receptor 5p57 (312 aa).

Residues M1 to V25 are Extracellular-facing. N-linked (GlcNAc...) asparagine glycosylation is present at N5. A helical membrane pass occupies residues I26–I46. Topologically, residues V47–Q54 are cytoplasmic. A helical membrane pass occupies residues L55–S75. Topologically, residues S76–A99 are extracellular. C97 and C189 are oxidised to a cystine. A helical transmembrane segment spans residues Q100–Y120. Residues D121–S133 lie on the Cytoplasmic side of the membrane. The helical transmembrane segment at T134–V154 threads the bilayer. Over N155–E196 the chain is Extracellular. N-linked (GlcNAc...) asparagine glycosylation occurs at N165. A helical membrane pass occupies residues V197–S217. Residues Y218 to A237 lie on the Cytoplasmic side of the membrane. Residues F238–I258 traverse the membrane as a helical segment. The Extracellular portion of the chain corresponds to Y259–N271. Residues K272–F292 form a helical membrane-spanning segment. The Cytoplasmic segment spans residues R293–S312.

This sequence belongs to the G-protein coupled receptor 1 family.

The protein resides in the cell membrane. Probable odorant receptor, which recognizes only aliphatic alcohols, suggesting that it may convey a 'woody' or 'sweet' sour. The protein is Olfactory receptor 5p57 of Mus musculus (Mouse).